Consider the following 472-residue polypeptide: 3-isopropylmalate dehydratase large subunit (472 aa).

[4Fe-4S] cluster-binding residues include cysteine 347, cysteine 407, and cysteine 410.

This sequence belongs to the aconitase/IPM isomerase family. LeuC type 1 subfamily. Heterodimer of LeuC and LeuD. [4Fe-4S] cluster serves as cofactor.

The catalysed reaction is (2R,3S)-3-isopropylmalate = (2S)-2-isopropylmalate. It functions in the pathway amino-acid biosynthesis; L-leucine biosynthesis; L-leucine from 3-methyl-2-oxobutanoate: step 2/4. Catalyzes the isomerization between 2-isopropylmalate and 3-isopropylmalate, via the formation of 2-isopropylmaleate. This chain is 3-isopropylmalate dehydratase large subunit, found in Parasynechococcus marenigrum (strain WH8102).